We begin with the raw amino-acid sequence, 283 residues long: Adenylate kinase 2, chloroplastic (283 aa).

Residues 1 to 59 (MTGCVNSISPPPVTLYRHRASPSRSSFSLSGDALHSLYRHRRVSRSPSIIAPKFQIVAA) constitute a chloroplast transit peptide. 74-79 (ASGKGT) is a binding site for ATP. Residues 94 to 123 (SAGDLLRAEIASGSENGRRAKEHMEKGQLV) are NMP. Residues R100, 121–123 (QLV), 150–153 (GYPR), and Q157 each bind AMP. The tract at residues 187 to 220 (GRRLDPVTGKIYHLKYSPPETEEIAVRLTQRFDD) is LID. Residue R188 participates in ATP binding. Residues R217 and R228 each coordinate AMP.

It belongs to the adenylate kinase family. Monomer.

It localises to the plastid. It is found in the chloroplast stroma. The catalysed reaction is AMP + ATP = 2 ADP. Its function is as follows. Catalyzes the reversible transfer of the terminal phosphate group between ATP and AMP. Plays an important role in cellular energy homeostasis and in adenine nucleotide metabolism. Plays a major role in the equilibration of adenylates and de novo synthesis of ADP in the plastid stroma. In Arabidopsis thaliana (Mouse-ear cress), this protein is Adenylate kinase 2, chloroplastic.